A 61-amino-acid chain; its full sequence is Potassium channel toxin alpha-KTx 6.7 (61 aa).

A signal peptide spans 1–23 (MNAKFILLLLVVTTTMLLPDTQG). 4 disulfide bridges follow: C29–C50, C35–C55, C39–C57, and C45–C60. A Cysteine amide modification is found at C60.

It belongs to the short scorpion toxin superfamily. Potassium channel inhibitor family. Alpha-KTx 06 subfamily. In terms of tissue distribution, expressed by the venom gland.

It localises to the secreted. Blocker of voltage-gated potassium channels. The protein is Potassium channel toxin alpha-KTx 6.7 of Opistophthalmus carinatus (African yellow leg scorpion).